The primary structure comprises 511 residues: 2,3-bisphosphoglycerate-independent phosphoglycerate mutase (511 aa).

Mn(2+)-binding residues include D14 and S64. Residue S64 is the Phosphoserine intermediate of the active site. Substrate contacts are provided by residues H125, 155-156 (RD), R187, R193, 259-262 (RADR), and K333. Mn(2+) is bound by residues D400, H404, D441, H442, and H460.

This sequence belongs to the BPG-independent phosphoglycerate mutase family. In terms of assembly, monomer. It depends on Mn(2+) as a cofactor.

It catalyses the reaction (2R)-2-phosphoglycerate = (2R)-3-phosphoglycerate. Its pathway is carbohydrate degradation; glycolysis; pyruvate from D-glyceraldehyde 3-phosphate: step 3/5. Its function is as follows. Catalyzes the interconversion of 2-phosphoglycerate and 3-phosphoglycerate. The chain is 2,3-bisphosphoglycerate-independent phosphoglycerate mutase from Pseudoalteromonas atlantica (strain T6c / ATCC BAA-1087).